The primary structure comprises 215 residues: Urease accessory protein UreG (215 aa).

15–22 provides a ligand contact to GTP; that stretch reads GPVGSGKT.

The protein belongs to the SIMIBI class G3E GTPase family. UreG subfamily. Homodimer. UreD, UreF and UreG form a complex that acts as a GTP-hydrolysis-dependent molecular chaperone, activating the urease apoprotein by helping to assemble the nickel containing metallocenter of UreC. The UreE protein probably delivers the nickel.

It localises to the cytoplasm. Facilitates the functional incorporation of the urease nickel metallocenter. This process requires GTP hydrolysis, probably effectuated by UreG. The sequence is that of Urease accessory protein UreG from Alcanivorax borkumensis (strain ATCC 700651 / DSM 11573 / NCIMB 13689 / SK2).